A 229-amino-acid polypeptide reads, in one-letter code: Somatolactin (229 aa).

A signal peptide spans 1–24 (MHLVSVIQRGVWAVLLWPNLLASS). Intrachain disulfides connect cysteine 29–cysteine 39, cysteine 87–cysteine 203, and cysteine 220–cysteine 228. Residues asparagine 143 and asparagine 175 are each glycosylated (N-linked (GlcNAc...) asparagine).

This sequence belongs to the somatotropin/prolactin family.

The protein localises to the secreted. The chain is Somatolactin from Cyclopterus lumpus (Lumpsucker).